The primary structure comprises 173 residues: Large ribosomal subunit protein uL10 (173 aa).

Belongs to the universal ribosomal protein uL10 family. In terms of assembly, part of the ribosomal stalk of the 50S ribosomal subunit. The N-terminus interacts with L11 and the large rRNA to form the base of the stalk. The C-terminus forms an elongated spine to which L12 dimers bind in a sequential fashion forming a multimeric L10(L12)X complex.

Functionally, forms part of the ribosomal stalk, playing a central role in the interaction of the ribosome with GTP-bound translation factors. The sequence is that of Large ribosomal subunit protein uL10 from Beutenbergia cavernae (strain ATCC BAA-8 / DSM 12333 / CCUG 43141 / JCM 11478 / NBRC 16432 / NCIMB 13614 / HKI 0122).